Here is a 160-residue protein sequence, read N- to C-terminus: Ribosomal RNA large subunit methyltransferase H (160 aa).

Residues leucine 76 and glycine 108 each contribute to the S-adenosyl-L-methionine site.

The protein belongs to the RNA methyltransferase RlmH family. As to quaternary structure, homodimer.

It localises to the cytoplasm. The catalysed reaction is pseudouridine(1915) in 23S rRNA + S-adenosyl-L-methionine = N(3)-methylpseudouridine(1915) in 23S rRNA + S-adenosyl-L-homocysteine + H(+). Functionally, specifically methylates the pseudouridine at position 1915 (m3Psi1915) in 23S rRNA. This is Ribosomal RNA large subunit methyltransferase H from Bradyrhizobium sp. (strain BTAi1 / ATCC BAA-1182).